The sequence spans 492 residues: Protein KOKOPELLI (492 aa).

2 disordered regions span residues Val-218–Met-354 and Ser-394–Gly-426. Residues Gln-256–Ala-270 are compositionally biased toward acidic residues. Positions Ser-287 to Glu-305 are enriched in low complexity. The segment covering Glu-317–Pro-336 has biased composition (polar residues). Basic and acidic residues-rich tracts occupy residues His-337 to Lys-348 and Lys-403 to Ser-412.

Mostly expressed in pollen and open flowers and, to a lower extent, in closed flowers.

In terms of biological role, positively regulates reproductive function by facilitating male gametophyte formation and double fertilization. This is Protein KOKOPELLI from Arabidopsis thaliana (Mouse-ear cress).